A 177-amino-acid polypeptide reads, in one-letter code: 2''-aminoglycoside nucleotidyltransferase (177 aa).

Residues 1–92 (MDTTQVTLIH…ELLDCEPAWW (92 aa)) are N-terminal domain. Positions 44, 46, and 86 each coordinate Mg(2+). Catalysis depends on aspartate 86, which acts as the Proton acceptor. The interval 93–177 (ADEAYEIAEA…RAAFRSRYAA (85 aa)) is C-terminal domain. Alanine 100 is a binding site for kanamycin A.

In terms of assembly, monomer. Mg(2+) serves as cofactor.

It catalyses the reaction nucleoside triphosphate + gentamicin = diphosphate + 2''-nucleotidylgentamicin.. In terms of biological role, mediates bacterial resistance to kanamycin, gentamicin, dibekacin, sisomicin and tobramycin by adenylating the 2''-hydroxyl group of these antibiotics. This is 2''-aminoglycoside nucleotidyltransferase from Klebsiella pneumoniae.